Here is a 29-residue protein sequence, read N- to C-terminus: Beta-theraphotoxin-Gr1b (29 aa).

Intrachain disulfides connect cysteine 2-cysteine 16, cysteine 9-cysteine 21, and cysteine 15-cysteine 25. Leucine amide is present on leucine 29.

Belongs to the neurotoxin 30 (phrixotoxin) family. In terms of tissue distribution, expressed by the venom gland.

The protein localises to the secreted. Its function is as follows. Inhibits the voltage-gated sodium channels Nav1.1/SCN1A (IC(50)=360 nM), Nav1.2/SCN2A (IC(50)=600 nM), Nav1.3/SCN3A (IC(50)=1280), Nav1.4/SCN4A (IC(50)=330 nM), Nav1.6/SCN8A (IC(50)=1200 nM), Nav1.7/SCN9A (IC(50)=1-40 nM), and voltage-gated potassium channels Kv11.1/KCNH2 (IC(50)=4.8 uM). Induces analgesia in mammals. This analgesia is mediated by a non-opioid receptor related mechanism. This Grammostola rosea (Chilean rose tarantula) protein is Beta-theraphotoxin-Gr1b.